The following is a 734-amino-acid chain: Cleavage stimulation factor subunit 77 (734 aa).

HAT repeat units follow at residues 20-52, 54-85, 93-128, 139-172, 198-237, 246-278, 280-312, 314-345, 347-379, 382-414, 416-450, and 474-505; these read SPIA…AQMA, NNDD…FIRK, EGQE…FLKS, HRKT…FENT, ERKK…FEKG, SSTK…WHVK, GSTD…MEES, GAIQ…FLRR, EGVE…MAFC, KEPK…FLTR, NDDR…FEQT, and EGSS…DLDH. Positions 637 to 734 are disordered; sequence VKQSFAAKGN…FSGELSGSTG (98 aa). Positions 664-677 are enriched in basic and acidic residues; that stretch reads LPRDRRATKRKDSD. Residues 709–734 show a composition bias toward polar residues; that stretch reads ATSSQTPTGSTSYGSAFSGELSGSTG.

As to quaternary structure, homodimer. Belongs to the CSTF complex. Forms a complex with cleavage and polyadenylation specificity factor (CPSF) subunits CPSF30, CSTF64, PCFS1, PCFS5 and FIPS5.

Its subcellular location is the nucleus. Functionally, one of the multiple factors required for polyadenylation and 3'-end cleavage of pre-mRNAs. Required for the targeted 3' processing of antisense transcripts that triggers transcriptional silencing of the corresponding sense gene. In Arabidopsis thaliana (Mouse-ear cress), this protein is Cleavage stimulation factor subunit 77.